The sequence spans 223 residues: Ras-related protein Rab-32 (223 aa).

N-acetylalanine is present on alanine 2. Residues valine 34, glycine 35, lysine 36, threonine 37, serine 38, serine 49, glutamine 50, tyrosine 52, and threonine 55 each coordinate GTP. Threonine 37 serves as a coordination point for Mg(2+). The Switch 1 motif lies at 46–60 (QLFSQHYRATIGVDF). Threonine 55 provides a ligand contact to Mg(2+). Serine 69 carries the post-translational modification Phosphoserine. Mg(2+) is bound at residue aspartate 79. 6 residues coordinate GTP: glycine 82, asparagine 141, lysine 142, aspartate 144, alanine 173, and lysine 174. Positions 82–95 (GQERFGNMTRVYYK) match the Switch 2 motif. Residues 176-195 (NINIDEATRFLVENMLANQQ) are PKA-RII subunit binding domain. Residues cysteine 222 and cysteine 223 are each lipidated (S-geranylgeranyl cysteine).

It belongs to the small GTPase superfamily. Rab family. As to quaternary structure, interacts with ANKRD27. A decreased interaction with ANKRD27 seen in the presence of SGSM2. Interacts with LRRK2 (via N-terminus); this interaction results in stimulation of RAB10 phosphorylation by LRRK2. Mg(2+) serves as cofactor. Widely expressed with highest levels in liver. Strong expression also found in melanocyte, platelet, mast cell and fibroblast cell lines.

It localises to the mitochondrion. It is found in the mitochondrion outer membrane. The protein resides in the cytoplasmic vesicle. The protein localises to the phagosome. Its subcellular location is the phagosome membrane. It localises to the melanosome. It is found in the melanosome membrane. The enzyme catalyses GTP + H2O = GDP + phosphate + H(+). Its activity is regulated as follows. Regulated by guanine the nucleotide exchange factor (GEF) BLOC-3 complex composed of HPS1 and HPS4 which promote the exchange of bound GDP for free GTP. Regulated by the GTPase activating protein (GAP) SGSM2/RUTBC1 which increases the GTP hydrolysis activity. Inhibited by GDP dissociation inhibitors (GDIs) which prevent Rab-GDP dissociation. Its function is as follows. The small GTPases Rab are key regulators of intracellular membrane trafficking, from the formation of transport vesicles to their fusion with membranes. Rabs cycle between an inactive GDP-bound form and an active GTP-bound form that is able to recruit to membranes different set of downstream effectors directly responsible for vesicle formation, movement, tethering and fusion. Also acts as an A-kinase anchoring protein by binding to the type II regulatory subunit of protein kinase A and anchoring it to the mitochondrion. Also involved in synchronization of mitochondrial fission. Plays a role in the maturation of phagosomes that engulf pathogens, such as S.aureus and M.tuberculosis. Plays an important role in the control of melanin production and melanosome biogenesis. In concert with RAB38, regulates the proper trafficking of melanogenic enzymes TYR, TYRP1 and DCT/TYRP2 to melanosomes in melanocytes. Stimulates phosphorylation of RAB10 'Thr-73' by LRRK2. The polypeptide is Ras-related protein Rab-32 (Mus musculus (Mouse)).